A 493-amino-acid polypeptide reads, in one-letter code: C2H2-type transcription factor ffmA (493 aa).

A compositionally biased stretch (low complexity) spans 1-18 (MPMPQYTMQPQYPVSQPH). Disordered regions lie at residues 1 to 50 (MPMP…SRYP), 68 to 140 (TTVG…YPDG), and 164 to 202 (EPPRTQVVGSQGRRGILPSVPGRVAPVTNGVNGTAKNTT). Composition is skewed to polar residues over residues 69 to 79 (TVGSLPPSTFL) and 192 to 202 (NGVNGTAKNTT). The C2H2-type 1 zinc-finger motif lies at 212-234 (FPCPHCNKTYLHAKHLKRHLLRH). The C2H2-type 2; degenerate zinc finger occupies 240 to 265 (YMCVLCKDTFSRSDILKRHFQKCSIR). Polar residues-rich tracts occupy residues 288–307 (QAAANTAKSLQEEVSSTVPP) and 484–493 (ASTTLGGDGK). 2 disordered regions span residues 288 to 316 (QAAANTAKSLQEEVSSTVPPSNGIAGATF) and 468 to 493 (TTTAGPQEGGMNGLYLASTTLGGDGK).

It belongs to the krueppel C2H2-type zinc-finger protein family.

The protein resides in the nucleus. Its function is as follows. Transcription factor that acts in coordination with atrR to regulate the expression of the ABC-type multidrug transporter abcG1 and thus plays a role in azole susceptibility. Regulates the expression of genes involved in fermentation. Is able to promote expression from the yeast FLO11 promoter. The chain is C2H2-type transcription factor ffmA from Aspergillus fumigatus (strain CBS 144.89 / FGSC A1163 / CEA10) (Neosartorya fumigata).